The sequence spans 429 residues: Dihydroorotase (429 aa).

His-62 and His-64 together coordinate Zn(2+). Substrate contacts are provided by residues 64–66 (HFR) and Asn-96. Zn(2+)-binding residues include Asp-154, His-181, and His-234. Asn-280 serves as a coordination point for substrate. Asp-307 is a binding site for Zn(2+). The active site involves Asp-307. Residues His-311 and 325 to 326 (FG) each bind substrate.

It belongs to the metallo-dependent hydrolases superfamily. DHOase family. Class I DHOase subfamily. It depends on Zn(2+) as a cofactor.

It catalyses the reaction (S)-dihydroorotate + H2O = N-carbamoyl-L-aspartate + H(+). It participates in pyrimidine metabolism; UMP biosynthesis via de novo pathway; (S)-dihydroorotate from bicarbonate: step 3/3. Catalyzes the reversible cyclization of carbamoyl aspartate to dihydroorotate. This chain is Dihydroorotase, found in Latilactobacillus sakei subsp. sakei (strain 23K) (Lactobacillus sakei subsp. sakei).